Consider the following 789-residue polypeptide: Glycerol-3-phosphate acyltransferase (789 aa).

The short motif at 275–280 is the HXXXXD motif element; it reads SHRSYI.

It belongs to the GPAT/DAPAT family.

The protein resides in the cell membrane. The catalysed reaction is sn-glycerol 3-phosphate + an acyl-CoA = a 1-acyl-sn-glycero-3-phosphate + CoA. Its pathway is phospholipid metabolism; CDP-diacylglycerol biosynthesis; CDP-diacylglycerol from sn-glycerol 3-phosphate: step 1/3. In Mycobacterium bovis (strain BCG / Pasteur 1173P2), this protein is Glycerol-3-phosphate acyltransferase.